A 287-amino-acid polypeptide reads, in one-letter code: Cuticle collagen 38 (287 aa).

The N-terminal stretch at methionine 1–glycine 19 is a signal peptide. The segment at glutamine 95–histidine 287 is disordered. Residues proline 98–leucine 107 show a composition bias toward pro residues. Collagen-like domains lie at glutamine 145–glycine 200 and glycine 215–proline 273. Low complexity predominate over residues threonine 184–aspartate 205. A compositionally biased stretch (gly residues) spans glycine 206–glycine 215. A compositionally biased stretch (low complexity) spans aspartate 238 to glutamine 252.

This sequence belongs to the cuticular collagen family. As to quaternary structure, collagen polypeptide chains are complexed within the cuticle by disulfide bonds and other types of covalent cross-links.

It localises to the nucleus. Its function is as follows. Probable cuticular collagen-like protein. Nematode cuticles are composed largely of collagen-like proteins. The cuticle functions both as an exoskeleton and as a barrier to protect the worm from its environment. Acts downstream of the Wnt signaling pathway, perhaps in the formation of the adult cuticle. The chain is Cuticle collagen 38 from Caenorhabditis elegans.